We begin with the raw amino-acid sequence, 434 residues long: Ribosomal RNA-processing protein 14 (434 aa).

N-acetylserine is present on Ser2. Basic and acidic residues-rich tracts occupy residues 32 to 58 (KSQE…LDPE), 70 to 79 (VMKKKEKDAK), and 95 to 105 (KQKEATSKVEG). Positions 32 to 257 (KSQEQWKAKK…RFKKGKKDSE (226 aa)) are disordered. The span at 121–140 (PDEDEEEEEDIKVIFDDEGN) shows a compositional bias: acidic residues. The span at 144 to 178 (LESKKDTTEPDRSVEKKSITEEEKLQRKKNLEALR) shows a compositional bias: basic and acidic residues. Coiled-coil stretches lie at residues 162 to 230 (ITEE…EIAS) and 293 to 360 (AKND…QKRK). Residues 220 to 241 (EQEQDQDEIASDSDMEDIDSDL) show a composition bias toward acidic residues. The segment covering 375–392 (TISERQKRREENLRIRKD) has biased composition (basic and acidic residues). The segment at 375-434 (TISERQKRREENLRIRKDNKGKKRNKQEKMKRKYVGSAVPKKRAGFEGRLKTGKKKGGPK) is disordered. Composition is skewed to basic residues over residues 393–408 (NKGK…KRKY) and 425–434 (KTGKKKGGPK).

It belongs to the SURF6 family. As to quaternary structure, component of the 90S and 60S pre-ribosomal particles.

It localises to the nucleus. It is found in the nucleolus. Involved in ribosome biogenesis and cell polarity. Required for the synthesis of both 40S and 60S ribosomal subunits and may also play some direct role in correct positioning of the mitotic spindle during mitosis. This chain is Ribosomal RNA-processing protein 14 (RRP14), found in Saccharomyces cerevisiae (strain ATCC 204508 / S288c) (Baker's yeast).